The primary structure comprises 324 residues: Beta-ketoacyl-[acyl-carrier-protein] synthase III (324 aa).

Active-site residues include Cys112 and His251. Residues 252–256 (QANLR) are ACP-binding. Asn281 is a catalytic residue.

Belongs to the thiolase-like superfamily. FabH family. As to quaternary structure, homodimer.

It localises to the cytoplasm. It carries out the reaction malonyl-[ACP] + acetyl-CoA + H(+) = 3-oxobutanoyl-[ACP] + CO2 + CoA. It participates in lipid metabolism; fatty acid biosynthesis. Functionally, catalyzes the condensation reaction of fatty acid synthesis by the addition to an acyl acceptor of two carbons from malonyl-ACP. Catalyzes the first condensation reaction which initiates fatty acid synthesis and may therefore play a role in governing the total rate of fatty acid production. Possesses both acetoacetyl-ACP synthase and acetyl transacylase activities. Its substrate specificity determines the biosynthesis of branched-chain and/or straight-chain of fatty acids. This Clostridium perfringens (strain ATCC 13124 / DSM 756 / JCM 1290 / NCIMB 6125 / NCTC 8237 / Type A) protein is Beta-ketoacyl-[acyl-carrier-protein] synthase III.